The sequence spans 192 residues: Glycerol-3-phosphate acyltransferase (192 aa).

5 consecutive transmembrane segments (helical) span residues 5–25, 50–70, 78–98, 112–132, and 153–173; these read VVLI…ITRI, FLAA…VYIA, DFYI…PIWL, ILIA…IIVF, and SFFF…LVFL.

The protein belongs to the PlsY family. Probably interacts with PlsX.

It localises to the cell membrane. It carries out the reaction an acyl phosphate + sn-glycerol 3-phosphate = a 1-acyl-sn-glycero-3-phosphate + phosphate. Its pathway is lipid metabolism; phospholipid metabolism. Functionally, catalyzes the transfer of an acyl group from acyl-phosphate (acyl-PO(4)) to glycerol-3-phosphate (G3P) to form lysophosphatidic acid (LPA). This enzyme utilizes acyl-phosphate as fatty acyl donor, but not acyl-CoA or acyl-ACP. This chain is Glycerol-3-phosphate acyltransferase, found in Wolbachia pipientis wMel.